The following is a 195-amino-acid chain: Holliday junction branch migration complex subunit RuvA (195 aa).

Residues 1-63 (MIASVRGEVI…EDSMTLYGFV (63 aa)) form a domain I region. Positions 64–142 (DGDARDLFLT…PVSAGGGAAV (79 aa)) are domain II. Positions 143 to 150 (GGHAIRGP) are flexible linker. The interval 150–195 (PVVEALVGLGFAAKQAEEATDKVLANDPEATTSSALRAALSMLGKK) is domain III.

The protein belongs to the RuvA family. Homotetramer. Forms an RuvA(8)-RuvB(12)-Holliday junction (HJ) complex. HJ DNA is sandwiched between 2 RuvA tetramers; dsDNA enters through RuvA and exits via RuvB. An RuvB hexamer assembles on each DNA strand where it exits the tetramer. Each RuvB hexamer is contacted by two RuvA subunits (via domain III) on 2 adjacent RuvB subunits; this complex drives branch migration. In the full resolvosome a probable DNA-RuvA(4)-RuvB(12)-RuvC(2) complex forms which resolves the HJ.

The protein localises to the cytoplasm. In terms of biological role, the RuvA-RuvB-RuvC complex processes Holliday junction (HJ) DNA during genetic recombination and DNA repair, while the RuvA-RuvB complex plays an important role in the rescue of blocked DNA replication forks via replication fork reversal (RFR). RuvA specifically binds to HJ cruciform DNA, conferring on it an open structure. The RuvB hexamer acts as an ATP-dependent pump, pulling dsDNA into and through the RuvAB complex. HJ branch migration allows RuvC to scan DNA until it finds its consensus sequence, where it cleaves and resolves the cruciform DNA. In Mycolicibacterium smegmatis (strain ATCC 700084 / mc(2)155) (Mycobacterium smegmatis), this protein is Holliday junction branch migration complex subunit RuvA.